We begin with the raw amino-acid sequence, 677 residues long: Gamma-tubulin complex subunit mod21 (677 aa).

In terms of assembly, component of the gamma-tubulin complex composed of at least alp4, alp6, alp16, ghf1, gtb1 and mod21.

The protein resides in the cytoplasm. The protein localises to the cytoskeleton. It is found in the microtubule organizing center. It localises to the spindle pole body. In terms of biological role, component of the gamma-tubulin complex that is required for the regulation of both interphase microtubule organization and nucleation, and mitotic bipolar spindles. Required for correct septation. This chain is Gamma-tubulin complex subunit mod21, found in Schizosaccharomyces pombe (strain 972 / ATCC 24843) (Fission yeast).